Consider the following 232-residue polypeptide: LexA repressor (232 aa).

A DNA-binding region (H-T-H motif) is located at residues 26-46; it reads FDEMKDALDLRSKSGIHRLIT. Catalysis depends on for autocatalytic cleavage activity residues Ser-153 and Lys-191.

This sequence belongs to the peptidase S24 family. Homodimer.

It carries out the reaction Hydrolysis of Ala-|-Gly bond in repressor LexA.. Its function is as follows. Represses a number of genes involved in the response to DNA damage (SOS response), including recA and lexA. In the presence of single-stranded DNA, RecA interacts with LexA causing an autocatalytic cleavage which disrupts the DNA-binding part of LexA, leading to derepression of the SOS regulon and eventually DNA repair. This is LexA repressor from Afipia carboxidovorans (strain ATCC 49405 / DSM 1227 / KCTC 32145 / OM5) (Oligotropha carboxidovorans).